A 102-amino-acid chain; its full sequence is MVDFAFELRKVQDTGKIVMGAKKSIHLAKVGGAKLIIVARNARPDIKEDIYYYAKLSGIPVYEFEGTSVELGTLLGRPHTVSALAVIDPGESKILALAGGKE.

It belongs to the eukaryotic ribosomal protein eL30 family. Part of the 50S ribosomal subunit.

This Thermococcus kodakarensis (strain ATCC BAA-918 / JCM 12380 / KOD1) (Pyrococcus kodakaraensis (strain KOD1)) protein is Large ribosomal subunit protein eL30.